A 160-amino-acid chain; its full sequence is Probable NADH dehydrogenase [ubiquinone] 1 beta subcomplex subunit 2, mitochondrial (160 aa).

It belongs to the complex I NDUFB2 subunit family. As to quaternary structure, complex I is composed of 45 different subunits.

The protein localises to the mitochondrion inner membrane. Its function is as follows. Accessory subunit of the mitochondrial membrane respiratory chain NADH dehydrogenase (Complex I), that is believed not to be involved in catalysis. Complex I functions in the transfer of electrons from NADH to the respiratory chain. The immediate electron acceptor for the enzyme is believed to be ubiquinone. This chain is Probable NADH dehydrogenase [ubiquinone] 1 beta subcomplex subunit 2, mitochondrial, found in Caenorhabditis elegans.